Reading from the N-terminus, the 374-residue chain is Fasciclin-like arabinogalactan protein CTB11 (374 aa).

An N-terminal signal peptide occupies residues Met-1 to Ala-18. FAS1 domains follow at residues Gln-19–Met-171 and Leu-173–Leu-302. Residues Asn-52, Asn-72, Asn-120, Asn-132, and Asn-176 are each glycosylated (N-linked (GlcNAc...) asparagine). The helical transmembrane segment at Ile-328–Leu-348 threads the bilayer.

This sequence belongs to the fasciclin-like AGP family.

It localises to the membrane. It participates in mycotoxin biosynthesis. In terms of biological role, fasciclin-like arabinogalactan protein; part of the gene cluster that mediates the biosynthesis of cercosporin, a light-activated, non-host-selective toxin. The perylenequinone chromophore of cercosporin absorbs light energy to attain an electronically-activated triplet state and produces active oxygen species such as the hydroxyl radical, superoxide, hydrogen peroxide or singlet oxygen upon reaction with oxygen molecules. These reactive oxygen species cause damage to various cellular components including lipids, proteins and nucleic acids. The first step of cercosporin biosynthesis is performed by the polyketide synthase CTB1 which catalyzes the formation of nor-toralactone. The starter unit acyltransferase (SAT) domain of CTB1 initiates polyketide extension by the selective utilization of acetyl-CoA, which is elongated to the heptaketide in the beta-ketoacyl synthase (KS) domain by successive condensations with six malonyl units introduced by the malonyl acyltransferase (MAT) domain. The product template (PT) domain catalyzes C4-C9 and C2-C11 aldol cyclizations and dehydrations to a trihydroxynaphthalene, which is thought to be delivered to the thioesterase (TE) domain for product release. The bifunctional enzyme CTB3 then methylates nor-toralactone to toralactone before conducting an unusual oxidative aromatic ring opening. The O-methyltransferase CTB2 further methylates the nascent OH-6 of the CBT3 product, blocking further oxidation at this site before the reductase CTB6 reduces the 2-oxopropyl ketone at position C7, giving naphthalene. The FAD-dependent monooxygenase CTB5 in concert with the multicopper oxidase CTB12 are responsible for homodimerization of naphthalene with CTB7 installing the dioxepine moiety, finally producing cercosporin. The fasciclin domain-containing protein CTB11 might act with CTB5 and CTB12 whereas the roles of CTB9 and CTB10 have still to be elucidated. This chain is Fasciclin-like arabinogalactan protein CTB11, found in Cercospora beticola (Sugarbeet leaf spot fungus).